Here is a 283-residue protein sequence, read N- to C-terminus: Pantothenate synthetase (283 aa).

30-37 (MGNLHDGH) contributes to the ATP binding site. Residue His37 is the Proton donor of the active site. Residue Gln61 participates in (R)-pantoate binding. Gln61 is a beta-alanine binding site. 149 to 152 (GEKD) is a binding site for ATP. Gln155 lines the (R)-pantoate pocket. 186-189 (LSSR) serves as a coordination point for ATP.

The protein belongs to the pantothenate synthetase family. As to quaternary structure, homodimer.

The protein resides in the cytoplasm. The enzyme catalyses (R)-pantoate + beta-alanine + ATP = (R)-pantothenate + AMP + diphosphate + H(+). Its pathway is cofactor biosynthesis; (R)-pantothenate biosynthesis; (R)-pantothenate from (R)-pantoate and beta-alanine: step 1/1. Functionally, catalyzes the condensation of pantoate with beta-alanine in an ATP-dependent reaction via a pantoyl-adenylate intermediate. The polypeptide is Pantothenate synthetase (Escherichia coli O6:K15:H31 (strain 536 / UPEC)).